The primary structure comprises 630 residues: tRNA uridine 5-carboxymethylaminomethyl modification enzyme MnmG (630 aa).

Position 13 to 18 (13 to 18 (GGGHAG)) interacts with FAD. 273 to 287 (GPRYCPSIEDKVMRF) is a binding site for NAD(+).

It belongs to the MnmG family. As to quaternary structure, homodimer. Heterotetramer of two MnmE and two MnmG subunits. The cofactor is FAD.

It is found in the cytoplasm. In terms of biological role, NAD-binding protein involved in the addition of a carboxymethylaminomethyl (cmnm) group at the wobble position (U34) of certain tRNAs, forming tRNA-cmnm(5)s(2)U34. The polypeptide is tRNA uridine 5-carboxymethylaminomethyl modification enzyme MnmG (Actinobacillus pleuropneumoniae serotype 3 (strain JL03)).